We begin with the raw amino-acid sequence, 266 residues long: Vitamin B12-binding protein (266 aa).

The N-terminal stretch at 1-22 (MAKSLFRALVALSFLAPLWLNA) is a signal peptide. The region spanning 25–266 (RVITLSPANT…QLCNALSQVD (242 aa)) is the Fe/B12 periplasmic-binding domain. Residues tyrosine 50 and 242 to 246 (DWFER) each bind cyanocob(III)alamin. The cysteines at positions 183 and 259 are disulfide-linked.

The protein belongs to the BtuF family. The complex is composed of two ATP-binding proteins (BtuD), two transmembrane proteins (BtuC) and a solute-binding protein (BtuF).

The protein resides in the periplasm. Functionally, part of the ABC transporter complex BtuCDF involved in vitamin B12 import. Binds vitamin B12 and delivers it to the periplasmic surface of BtuC. This Escherichia coli O6:H1 (strain CFT073 / ATCC 700928 / UPEC) protein is Vitamin B12-binding protein.